We begin with the raw amino-acid sequence, 582 residues long: Sulfite reductase [NADPH] hemoprotein beta-component (582 aa).

Residues 1-12 are compositionally biased toward basic and acidic residues; it reads MDLKVKVDRSRD. The disordered stretch occupies residues 1–26; it reads MDLKVKVDRSRDVSQPLDKLGPDETL. Positions 447, 453, 492, and 496 each coordinate [4Fe-4S] cluster. Siroheme is bound at residue cysteine 496.

This sequence belongs to the nitrite and sulfite reductase 4Fe-4S domain family. Alpha(8)-beta(8). The alpha component is a flavoprotein, the beta component is a hemoprotein. It depends on siroheme as a cofactor. [4Fe-4S] cluster serves as cofactor.

It carries out the reaction hydrogen sulfide + 3 NADP(+) + 3 H2O = sulfite + 3 NADPH + 4 H(+). Its pathway is sulfur metabolism; hydrogen sulfide biosynthesis; hydrogen sulfide from sulfite (NADPH route): step 1/1. Its function is as follows. Component of the sulfite reductase complex that catalyzes the 6-electron reduction of sulfite to sulfide. This is one of several activities required for the biosynthesis of L-cysteine from sulfate. This Afipia carboxidovorans (strain ATCC 49405 / DSM 1227 / KCTC 32145 / OM5) (Oligotropha carboxidovorans) protein is Sulfite reductase [NADPH] hemoprotein beta-component.